A 1082-amino-acid polypeptide reads, in one-letter code: AP-3 complex subunit beta-2 (1082 aa).

Residues 1–30 (MSAAPAYSEDKGGSAGPGEPEYGHDPASGG) form a disordered region. Residues serine 272 and serine 282 each carry the phosphoserine modification. Residues 666–677 (NREKRKEKEKPF) are compositionally biased toward basic and acidic residues. The tract at residues 666–801 (NREKRKEKEK…KTPPGSKSAP (136 aa)) is disordered. Acidic residues predominate over residues 691–700 (ADSEPESESE). The segment covering 704-715 (KSSSGSGSGESS) has biased composition (low complexity). Composition is skewed to acidic residues over residues 716 to 726 (SESDNEEEDEE) and 775 to 784 (VTSESEEEQV).

The protein belongs to the adaptor complexes large subunit family. In terms of assembly, adaptor protein complex 3 (AP-3) is a heterotetramer composed of two large adaptins (delta-type subunit AP3D1 and beta-type subunit AP3B1 or AP3B2), a medium adaptin (mu-type subunit AP3M1 or AP3M2) and a small adaptin (sigma-type subunit APS1 or AP3S2). AP-3 associates with the BLOC-1 complex.

The protein localises to the cytoplasmic vesicle. The protein resides in the clathrin-coated vesicle membrane. Its subcellular location is the golgi apparatus. Subunit of non-clathrin- and clathrin-associated adaptor protein complex 3 (AP-3) that plays a role in protein sorting in the late-Golgi/trans-Golgi network (TGN) and/or endosomes. The AP complexes mediate both the recruitment of clathrin to membranes and the recognition of sorting signals within the cytosolic tails of transmembrane cargo molecules. AP-3 appears to be involved in the sorting of a subset of transmembrane proteins targeted to lysosomes and lysosome-related organelles. In concert with the BLOC-1 complex, AP-3 is required to target cargos into vesicles assembled at cell bodies for delivery into neurites and nerve terminals. The sequence is that of AP-3 complex subunit beta-2 (Ap3b2) from Mus musculus (Mouse).